Reading from the N-terminus, the 637-residue chain is Type II restriction enzyme and methyltransferase RM.BcgI (637 aa).

It in the C-terminal section; belongs to the N(4)/N(6)-methyltransferase family. In terms of assembly, heterotrimer of two A and one B subunit. Both subunits are necessary for DNA-binding, which is sequence non-specific. Requires Mg(2+) as cofactor.

The catalysed reaction is Endonucleolytic cleavage of DNA to give specific double-stranded fragments with terminal 5'-phosphates.. It catalyses the reaction a 2'-deoxyadenosine in DNA + S-adenosyl-L-methionine = an N(6)-methyl-2'-deoxyadenosine in DNA + S-adenosyl-L-homocysteine + H(+). Its activity is regulated as follows. DNA restriction requires S-adenosyl-L-methionine and Mg(2+), and is inhibited by S-adenosyl-homocysteine. SAM may be a cofactor for DNA restriction. In terms of biological role, a B, G, H and S subtype restriction enzyme that recognizes the double-stranded sequence 5'-CGAN(6)TGC-3' and cleaves bilaterally and symmetrically 10 base pairs upstream and 12 base pairs downstream of the sequence to release a 34-base pair fragment. Methylation of the recognition sequence occurs on the adenine in either one or both strands; seems to methylate restricted DNA. This subunit has no methylation or DNA restriction activity on its own. This is Type II restriction enzyme and methyltransferase RM.BcgI from Heyndrickxia coagulans (Weizmannia coagulans).